Consider the following 105-residue polypeptide: DNA-directed RNA polymerase RPB9 homolog (105 aa).

Cys-4, Cys-7, Cys-24, Cys-26, Cys-73, Cys-76, and Cys-96 together coordinate Zn(2+). The segment at 4-26 (CKACSSCMVRTYVDGNIIFRCSC) adopts a C4-type; atypical zinc-finger fold.

It belongs to the Asfivirus DNA-directed RNA polymerase RPB9 homolog family. As to quaternary structure, part of the viral DNA-directed RNA polymerase that consists of 8 polII-like subunits (RPB1, RPB2, RPB3, RPB5, RPB6, RPB7, RPB9, RPB10), a capping enzyme and a termination factor.

The protein resides in the host cytoplasm. Functionally, component of the DNA-directed RNA polymerase (RNAP) that catalyzes the transcription in the cytoplasm of viral DNA into RNA using the four ribonucleoside triphosphates as substrates. This African swine fever virus (isolate Pig/Kenya/KEN-50/1950) (ASFV) protein is DNA-directed RNA polymerase RPB9 homolog.